Reading from the N-terminus, the 451-residue chain is Tubulin gamma-2 chain (451 aa).

Ser131 is subject to Phosphoserine; by BRSK1. 142–148 (AGGTGSG) contacts GTP.

The protein belongs to the tubulin family. As to quaternary structure, component of the gamma-tubulin ring complex (gTuRC) consisting of TUBGCP2, TUBGCP3, TUBGCP4, TUBGCP5 and TUBGCP6 and gamma-tubulin TUBG1 or TUBG2. TUBGCP2, TUBGCP3, TUBGCP4, TUBGCP5 and TUBGCP6 assemble in a 5:5:2:1:1 stoichiometry; each is associated with a gamma-tubulin, thereby arranging 14 gamma-tubulins in a helical manner. Gamma-tubulin at the first position is blocked by TUBGCP3 at the last position, allowing 13 protafilaments to grow into a microtubule. Interacts with alpha-beta tubulin heterodimers; the interaction allows microtubules to nucleate from the gTuRC. Phosphorylation at Ser-131 by BRSK1 regulates centrosome duplication, possibly by mediating relocation of gamma-tubulin and its associated proteins from the cytoplasm to the centrosome.

Its subcellular location is the cytoplasm. The protein resides in the cytoskeleton. The protein localises to the microtubule organizing center. It localises to the centrosome. Tubulin is the major constituent of microtubules, protein filaments consisting of alpha- and beta-tubulin heterodimers. Gamma-tubulin is a key component of the gamma-tubulin ring complex (gTuRC) which mediates microtubule nucleation. The gTuRC regulates the minus-end nucleation of alpha-beta tubulin heterodimers that grow into microtubule protafilaments, a critical step in centrosome duplication and spindle formation. The protein is Tubulin gamma-2 chain (TUBG2) of Homo sapiens (Human).